A 223-amino-acid chain; its full sequence is Phosphoribosylformylglycinamidine synthase subunit PurQ (223 aa).

Positions 3–223 (FAVLVFPGSN…MVKSWREQNV (221 aa)) constitute a Glutamine amidotransferase type-1 domain. Cysteine 85 functions as the Nucleophile in the catalytic mechanism. Active-site residues include histidine 193 and glutamate 195.

In terms of assembly, part of the FGAM synthase complex composed of 1 PurL, 1 PurQ and 2 PurS subunits.

It is found in the cytoplasm. It catalyses the reaction N(2)-formyl-N(1)-(5-phospho-beta-D-ribosyl)glycinamide + L-glutamine + ATP + H2O = 2-formamido-N(1)-(5-O-phospho-beta-D-ribosyl)acetamidine + L-glutamate + ADP + phosphate + H(+). The catalysed reaction is L-glutamine + H2O = L-glutamate + NH4(+). The protein operates within purine metabolism; IMP biosynthesis via de novo pathway; 5-amino-1-(5-phospho-D-ribosyl)imidazole from N(2)-formyl-N(1)-(5-phospho-D-ribosyl)glycinamide: step 1/2. Its function is as follows. Part of the phosphoribosylformylglycinamidine synthase complex involved in the purines biosynthetic pathway. Catalyzes the ATP-dependent conversion of formylglycinamide ribonucleotide (FGAR) and glutamine to yield formylglycinamidine ribonucleotide (FGAM) and glutamate. The FGAM synthase complex is composed of three subunits. PurQ produces an ammonia molecule by converting glutamine to glutamate. PurL transfers the ammonia molecule to FGAR to form FGAM in an ATP-dependent manner. PurS interacts with PurQ and PurL and is thought to assist in the transfer of the ammonia molecule from PurQ to PurL. In Staphylococcus epidermidis (strain ATCC 35984 / DSM 28319 / BCRC 17069 / CCUG 31568 / BM 3577 / RP62A), this protein is Phosphoribosylformylglycinamidine synthase subunit PurQ.